The sequence spans 273 residues: Undecaprenyl-diphosphatase (273 aa).

Transmembrane regions (helical) follow at residues 6–26 (SLLI…LPVS), 45–65 (AKTF…VMFW), 90–110 (LTLI…LLFH), 116–136 (LFNP…LIAA), 190–210 (YAAS…ATAL), 222–242 (GDIP…LIAI), and 252–272 (ISFI…YVVF).

It belongs to the UppP family.

It is found in the cell inner membrane. It carries out the reaction di-trans,octa-cis-undecaprenyl diphosphate + H2O = di-trans,octa-cis-undecaprenyl phosphate + phosphate + H(+). Catalyzes the dephosphorylation of undecaprenyl diphosphate (UPP). Confers resistance to bacitracin. The protein is Undecaprenyl-diphosphatase of Escherichia coli O127:H6 (strain E2348/69 / EPEC).